The sequence spans 329 residues: Glyceraldehyde-3-phosphate dehydrogenase 1 (329 aa).

Residues 11-12 (RI), Asp-33, and Lys-78 each bind NAD(+). Residues 148–150 (SCT), Thr-179, 208–209 (TG), and Arg-231 each bind D-glyceraldehyde 3-phosphate. Cys-149 serves as the catalytic Nucleophile. Asn-313 is a binding site for NAD(+).

This sequence belongs to the glyceraldehyde-3-phosphate dehydrogenase family. As to quaternary structure, homotetramer.

The protein localises to the cytoplasm. The enzyme catalyses D-glyceraldehyde 3-phosphate + phosphate + NAD(+) = (2R)-3-phospho-glyceroyl phosphate + NADH + H(+). Its pathway is carbohydrate degradation; glycolysis; pyruvate from D-glyceraldehyde 3-phosphate: step 1/5. This Kluyveromyces lactis (strain ATCC 8585 / CBS 2359 / DSM 70799 / NBRC 1267 / NRRL Y-1140 / WM37) (Yeast) protein is Glyceraldehyde-3-phosphate dehydrogenase 1 (GAP1).